A 633-amino-acid polypeptide reads, in one-letter code: Probably inactive receptor-like protein kinase At2g46850 (633 aa).

Residues 1-28 (MPPLFLPSSSSALFLLLLLLLTLQTLTS) form the signal peptide. The Extracellular portion of the chain corresponds to 29–285 (ISLSQPQALR…IKKHNGKKLT (257 aa)). Residues asparagine 45, asparagine 69, and asparagine 231 are each glycosylated (N-linked (GlcNAc...) asparagine). Residues 286–306 (VLAGVLAPLFILGSLLALFCL) traverse the membrane as a helical segment. Topologically, residues 307–633 (LKRPVTSHKD…SPDSIYLPKT (327 aa)) are cytoplasmic. The Protein kinase domain occupies 355-633 (FQDSQKLTQG…SPDSIYLPKT (279 aa)). Residues 361–369 (LTQGKTGTI) and lysine 384 contribute to the ATP site.

The protein belongs to the protein kinase superfamily. Ser/Thr protein kinase family.

It is found in the membrane. This Arabidopsis thaliana (Mouse-ear cress) protein is Probably inactive receptor-like protein kinase At2g46850.